Here is a 476-residue protein sequence, read N- to C-terminus: Bifunctional protein HldE (476 aa).

The ribokinase stretch occupies residues 1-318; sequence MKPILPDYNN…AEAIHGSRDT (318 aa). 195 to 198 serves as a coordination point for ATP; it reads NMSE. Aspartate 264 is an active-site residue. The segment at 344–476 is cytidylyltransferase; sequence MTNGCFDILH…IIDAIKGGRG (133 aa).

This sequence in the N-terminal section; belongs to the carbohydrate kinase PfkB family. The protein in the C-terminal section; belongs to the cytidylyltransferase family. In terms of assembly, homodimer.

It catalyses the reaction D-glycero-beta-D-manno-heptose 7-phosphate + ATP = D-glycero-beta-D-manno-heptose 1,7-bisphosphate + ADP + H(+). It carries out the reaction D-glycero-beta-D-manno-heptose 1-phosphate + ATP + H(+) = ADP-D-glycero-beta-D-manno-heptose + diphosphate. It participates in nucleotide-sugar biosynthesis; ADP-L-glycero-beta-D-manno-heptose biosynthesis; ADP-L-glycero-beta-D-manno-heptose from D-glycero-beta-D-manno-heptose 7-phosphate: step 1/4. The protein operates within nucleotide-sugar biosynthesis; ADP-L-glycero-beta-D-manno-heptose biosynthesis; ADP-L-glycero-beta-D-manno-heptose from D-glycero-beta-D-manno-heptose 7-phosphate: step 3/4. Its pathway is bacterial outer membrane biogenesis; LPS core biosynthesis. Its function is as follows. Catalyzes the phosphorylation of D-glycero-D-manno-heptose 7-phosphate at the C-1 position to selectively form D-glycero-beta-D-manno-heptose-1,7-bisphosphate. Functionally, catalyzes the ADP transfer from ATP to D-glycero-beta-D-manno-heptose 1-phosphate, yielding ADP-D-glycero-beta-D-manno-heptose. This is Bifunctional protein HldE from Vibrio vulnificus (strain YJ016).